We begin with the raw amino-acid sequence, 144 residues long: Maximins 10/H15 (144 aa).

Positions 1 to 18 (MNFKYIVAVSFLIASAYA) are cleaved as a signal peptide. A propeptide spanning residues 19–43 (RSVQNDEQSLSQRDVLEEESLREIR) is cleaved from the precursor. Ser70 carries the serine amide modification. Residues 74–123 (TAEDHEVMKRLEAVMRDLDSLDYPEEATERETRGFNQEEIANLFTKKEKR) constitute a propeptide that is removed on maturation. Leu143 carries the post-translational modification Leucine amide.

The protein belongs to the bombinin family. In terms of tissue distribution, expressed by the skin glands.

The protein localises to the secreted. In terms of biological role, maximin-10 shows antimicrobial activity against bacteria and against the fungus C.albicans. It has little hemolytic activity. Maximin-H15 shows antimicrobial activity against bacteria and against the fungus C.albicans. Shows strong hemolytic activity. The protein is Maximins 10/H15 of Bombina maxima (Giant fire-bellied toad).